Consider the following 898-residue polypeptide: Interleukin enhancer-binding factor 3-B (898 aa).

A DZF domain is found at 5–379; the sequence is RIFLNDDRHV…ALKRPIEEDG (375 aa). Disordered regions lie at residues 52–87, 374–403, 468–529, 627–651, and 711–799; these read QEKD…NPTR, PIEE…PPQA, LPTG…VMEL, PPPQ…RGGF, and GEGY…QGAA. A compositionally biased stretch (acidic residues) spans 61–71; it reads ENPEPEETETT. Basic and acidic residues-rich tracts occupy residues 72–81 and 374–384; these read EEGKDSEAKT and PIEEDGEDKSP. A Bipartite nuclear localization signal motif is present at residues 372–390; it reads KRPIEEDGEDKSPSKKKKK. Residues 399 to 468 enclose the DRBM 1 domain; the sequence is EPPQAMNALM…AVKVLQDMGL (70 aa). The segment covering 474-483 has biased composition (acidic residues); that stretch reads EKEESVDESE. A compositionally biased stretch (polar residues) spans 489 to 513; that stretch reads QTPSQTADSEQADSSAGDQSESGKQ. The DRBM 2 domain occupies 521–587; that stretch reads HGKNPVMELN…ALSALEKLFP (67 aa). A compositionally biased stretch (gly residues) spans 637–651; sequence RGGMNRGRGRGRGGF. A compositionally biased stretch (pro residues) spans 717-747; it reads PTPPKPFVKKPPPPQQQQQPPPQHASNPPKP. Residues 749 to 782 are compositionally biased toward low complexity; that stretch reads YNQGYQGHQGGQQQQQPQQQQQQTYNQNQYSNYG.

As to quaternary structure, a component of a ybx2/frgy2-containing mRNA-ribonucleoprotein (mRNP) complex. Also a component of the CCAAT box transcription factor (CBTF) complex. Post-translationally, phosphorylated. Phosphorylation affects nuclear translocation. Methylated by protein arginine N-methyltransferase 1 (prmt1b) in the RGG-rich domain. Methylation decreases DNA-binding and thereby decreases transcription of the gata2 gene, but does not regulate dsRNA binding or subcellular localization.

The protein resides in the nucleus. The protein localises to the cytoplasm. Its function is as follows. RNA-binding protein that plays an essential role in the biogenesis of circular RNAs (circRNAs) which are produced by back-splicing circularization of pre-mRNAs. Within the nucleus, promotes circRNAs processing by stabilizing the regulatory elements residing in the flanking introns of the circularized exons. Plays thereby a role in the back-splicing of a subset of circRNAs. As a consequence, participates in a wide range of transcriptional and post-transcriptional processes. Binds to poly-U elements and AU-rich elements (AREs) in the 3'-UTR of target mRNAs. Upon viral infection, ILF3 accumulates in the cytoplasm and participates in the innate antiviral response. Mechanistically, ILF3 becomes phosphorylated and activated by the double-stranded RNA-activated protein kinase/PKR which releases ILF3 from cellular mature circRNAs. In turn, unbound ILF3 molecules are able to interact with and thus inhibit viral mRNAs. Has a cytoplasmic role early in development as part of a ribonucleoprotein (mRNP) complex which may regulate mRNA transport and/or translation. Following nuclear localization at the mid-blastula transition, acts as a transcription factor and binds the 5'-CCAAT-3' promoter sequence to regulate transcription of the gata2 gene as a subunit of the CCAAT box transcription factor (CBTF). Its role as an mRNP component negatively regulates its activity as a transcription factor by precluding its nuclear localization. This is Interleukin enhancer-binding factor 3-B (ilf3-b) from Xenopus laevis (African clawed frog).